Reading from the N-terminus, the 273-residue chain is Rhamnulose-1-phosphate aldolase (273 aa).

Residue Glu117 is part of the active site. Positions 140, 142, and 211 each coordinate Zn(2+).

It belongs to the aldolase class II family. RhaD subfamily. Zn(2+) serves as cofactor.

It is found in the cytoplasm. The enzyme catalyses L-rhamnulose 1-phosphate = (S)-lactaldehyde + dihydroxyacetone phosphate. Its pathway is carbohydrate degradation; L-rhamnose degradation; glycerone phosphate from L-rhamnose: step 3/3. In terms of biological role, catalyzes the reversible cleavage of L-rhamnulose-1-phosphate to dihydroxyacetone phosphate (DHAP) and L-lactaldehyde. This chain is Rhamnulose-1-phosphate aldolase, found in Listeria monocytogenes serovar 1/2a (strain ATCC BAA-679 / EGD-e).